A 195-amino-acid polypeptide reads, in one-letter code: Thymidine kinase (195 aa).

ATP-binding positions include 9–16 (STMNAGKS) and 87–90 (DEAQ). Catalysis depends on glutamate 88, which acts as the Proton acceptor. Zn(2+) is bound by residues cysteine 145, cysteine 147, cysteine 182, and histidine 185.

The protein belongs to the thymidine kinase family. Homotetramer.

It is found in the cytoplasm. It catalyses the reaction thymidine + ATP = dTMP + ADP + H(+). In Jannaschia sp. (strain CCS1), this protein is Thymidine kinase.